The sequence spans 503 residues: MINIRPDEISSIIREQIEQYDQDVKVDNIGTVLQVGDGIARVYGLDQVMSGELLEFEDKTIGIALNLENDNVGVVLMGNGRQILEGSTVKTTGQIAQIPTGEAFLGRVVNPLGAPIDGKGDIANTETRLLEAMAPGIISRKSVCEPLQTGITSIDAMIPIGRGQRELIIGDRQTGKTAIAVDTIINQKTEDVVCVYVGVGQKASTVAQVVNVLEEKEAMAYTIIVCASANDPATLQYIAPYAGAALAEYFMYNGKATLVIYDDLTKQAMAYRQMSLLLRRPPGREAYPGDVFYLHSRLLERAAKLSDALGGGSMTALPVIETQASDVSAYIPTNVISITDGQIFLSNDLFNSGIRPAINVGISVSRVGSAAQTKAMKQVAGKLKLELAQFAELEAFSQFASDLDEATQKQLARGTRLREVLKQPQNSPLSVAEQVALIYTGINGFLDELEVASVKKYCASLLSFLNTSNNSYIGIVSSTNQFTAEAETALKEAISESKAVFMK.

170-177 (GDRQTGKT) contacts ATP.

This sequence belongs to the ATPase alpha/beta chains family. In terms of assembly, F-type ATPases have 2 components, CF(1) - the catalytic core - and CF(0) - the membrane proton channel. CF(1) has five subunits: alpha(3), beta(3), gamma(1), delta(1), epsilon(1). CF(0) has four main subunits: a, b, b' and c.

It is found in the plastid. The protein localises to the chloroplast thylakoid membrane. The catalysed reaction is ATP + H2O + 4 H(+)(in) = ADP + phosphate + 5 H(+)(out). Functionally, produces ATP from ADP in the presence of a proton gradient across the membrane. The alpha chain is a regulatory subunit. The polypeptide is ATP synthase subunit alpha, chloroplastic (Trieres chinensis (Marine centric diatom)).